A 110-amino-acid polypeptide reads, in one-letter code: Guanine nucleotide-binding protein subunit gamma (110 aa).

A lipid anchor (S-palmitoyl cysteine) is attached at cysteine 106. Cysteine methyl ester is present on cysteine 107. Cysteine 107 carries the S-farnesyl cysteine lipid modification. Positions 108 to 110 are cleaved as a propeptide — removed in mature form; sequence TLM.

This sequence belongs to the G protein gamma family. In terms of assembly, g proteins are composed of 3 units, alpha, beta and gamma. The beta-gamma subunit complex (STE4-STE18 complex) interacts with PLP1 and PLP2.

The protein resides in the membrane. In terms of biological role, implicated in the pheromone A- and alpha-factor response pathway. The beta and gamma chains of the putative yeast mating response pathway G protein play a positive role in initiation of the mating response. This chain is Guanine nucleotide-binding protein subunit gamma (STE18), found in Saccharomyces cerevisiae (strain ATCC 204508 / S288c) (Baker's yeast).